The primary structure comprises 746 residues: WD repeat-containing and planar cell polarity effector protein fritz homolog (746 aa).

WD repeat units lie at residues 326–374 (IQCV…TLLA) and 375–414 (QTEL…INIQ).

This sequence belongs to the WD repeat fritz family. Component of the CPLANE (ciliogenesis and planar polarity effectors) complex, composed of INTU, FUZ and WDPCP. Interacts with CPLANE1.

The protein localises to the cell membrane. It is found in the cytoplasm. Its subcellular location is the cytoskeleton. The protein resides in the cilium axoneme. It localises to the cilium basal body. Functionally, probable effector of the planar cell polarity signaling pathway which regulates the septin cytoskeleton in both ciliogenesis and collective cell movements. Together with FUZ and WDPCP proposed to function as core component of the CPLANE (ciliogenesis and planar polarity effectors) complex involved in the recruitment of peripheral IFT-A proteins to basal bodies. Binds phosphatidylinositol 3-phosphate with highest affinity, followed by phosphatidylinositol 4-phosphate and phosphatidylinositol 5-phosphate. In Homo sapiens (Human), this protein is WD repeat-containing and planar cell polarity effector protein fritz homolog (WDPCP).